The chain runs to 514 residues: Cobyric acid synthase (514 aa).

One can recognise a GATase cobBQ-type domain in the interval alanine 263–leucine 457. Residue cysteine 344 is the Nucleophile of the active site. Histidine 449 is a catalytic residue.

This sequence belongs to the CobB/CobQ family. CobQ subfamily.

The protein operates within cofactor biosynthesis; adenosylcobalamin biosynthesis. In terms of biological role, catalyzes amidations at positions B, D, E, and G on adenosylcobyrinic A,C-diamide. NH(2) groups are provided by glutamine, and one molecule of ATP is hydrogenolyzed for each amidation. In Desulfitobacterium hafniense (strain DSM 10664 / DCB-2), this protein is Cobyric acid synthase.